We begin with the raw amino-acid sequence, 194 residues long: Probable GTP-binding protein EngB (194 aa).

One can recognise an EngB-type G domain in the interval 22-194 (DLPEYALAGR…AWQFIKEGME (173 aa)). Residues 30–37 (GRSNVGKS), 57–61 (GKTQT), 75–78 (DVPG), 142–145 (TKAD), and 174–176 (FSS) each bind GTP. Mg(2+) contacts are provided by Ser-37 and Thr-59.

Belongs to the TRAFAC class TrmE-Era-EngA-EngB-Septin-like GTPase superfamily. EngB GTPase family. It depends on Mg(2+) as a cofactor.

Necessary for normal cell division and for the maintenance of normal septation. This chain is Probable GTP-binding protein EngB, found in Listeria innocua serovar 6a (strain ATCC BAA-680 / CLIP 11262).